Reading from the N-terminus, the 363-residue chain is Endopolygalacturonase B (363 aa).

The N-terminal stretch at Met-1–Ala-20 is a signal peptide. The propeptide occupies Val-21–Arg-28. The cysteines at positions 31 and 46 are disulfide-linked. 6 PbH1 repeats span residues Ser-158 to Ser-187, Ser-188 to Ser-209, Gly-210 to Ser-230, Val-239 to Thr-260, Val-268 to Gln-290, and Thr-302 to Gly-347. The N-linked (GlcNAc...) asparagine glycan is linked to Asn-162. Asp-202 acts as the Proton donor in catalysis. Cys-204 and Cys-220 are oxidised to a cystine. Residue His-224 is part of the active site. Disulfide bonds link Cys-330–Cys-335 and Cys-354–Cys-363. Residue Asn-356 is glycosylated (N-linked (GlcNAc...) asparagine).

It belongs to the glycosyl hydrolase 28 family.

Its subcellular location is the secreted. The enzyme catalyses (1,4-alpha-D-galacturonosyl)n+m + H2O = (1,4-alpha-D-galacturonosyl)n + (1,4-alpha-D-galacturonosyl)m.. Its function is as follows. Involved in maceration and soft-rotting of plant tissue. Hydrolyzes the 1,4-alpha glycosidic bonds of de-esterified pectate in the smooth region of the plant cell wall. The chain is Endopolygalacturonase B (pgaB) from Aspergillus oryzae (strain ATCC 42149 / RIB 40) (Yellow koji mold).